The sequence spans 199 residues: Recombination protein RecR (199 aa).

The C4-type zinc-finger motif lies at 57–72 (CERCNNLSEAPLCAVC). Positions 80 to 174 (SILCVVESPA…TISRIARGVP (95 aa)) constitute a Toprim domain.

The protein belongs to the RecR family.

In terms of biological role, may play a role in DNA repair. It seems to be involved in an RecBC-independent recombinational process of DNA repair. It may act with RecF and RecO. The sequence is that of Recombination protein RecR from Acidithiobacillus ferrooxidans (strain ATCC 23270 / DSM 14882 / CIP 104768 / NCIMB 8455) (Ferrobacillus ferrooxidans (strain ATCC 23270)).